Here is a 1488-residue protein sequence, read N- to C-terminus: WD repeat-containing protein 7 (1488 aa).

WD repeat units follow at residues 17 to 56 (APTH…EVNP), 62 to 104 (GHTA…CIEF), 156 to 199 (ISPD…SGLQ), 324 to 366 (VICP…DKQE), 404 to 443 (NEPL…IVQL), 462 to 507 (GHRN…MKHI), and 558 to 597 (RHLF…LDRC). Disordered regions lie at residues 761–781 (EEED…PEYR) and 911–947 (GDHM…QGQI). Residues 768–781 (VMRQRREESDPEYR) are compositionally biased toward basic and acidic residues. The residue at position 935 (serine 935) is a Phosphoserine. Residues 937–947 (PASSNIVQGQI) are compositionally biased toward polar residues. WD repeat units follow at residues 1349-1388 (PAIC…CQTI) and 1390-1430 (GHKG…LGSI). At serine 1454 the chain carries Phosphoserine.

The polypeptide is WD repeat-containing protein 7 (Wdr7) (Rattus norvegicus (Rat)).